The chain runs to 245 residues: tRNA (guanine-N(1)-)-methyltransferase (245 aa).

S-adenosyl-L-methionine is bound by residues Gly111 and 131–136; that span reads MGDYVL.

The protein belongs to the RNA methyltransferase TrmD family. As to quaternary structure, homodimer.

It localises to the cytoplasm. The catalysed reaction is guanosine(37) in tRNA + S-adenosyl-L-methionine = N(1)-methylguanosine(37) in tRNA + S-adenosyl-L-homocysteine + H(+). Functionally, specifically methylates guanosine-37 in various tRNAs. The sequence is that of tRNA (guanine-N(1)-)-methyltransferase from Staphylococcus epidermidis (strain ATCC 35984 / DSM 28319 / BCRC 17069 / CCUG 31568 / BM 3577 / RP62A).